The primary structure comprises 236 residues: Ribitol-5-phosphate cytidylyltransferase (236 aa).

Residues Leu7–Gly10 and Gly80–Thr86 each bind CTP.

This sequence belongs to the IspD/TarI cytidylyltransferase family. TarI subfamily.

It carries out the reaction D-ribitol 5-phosphate + CTP + H(+) = CDP-L-ribitol + diphosphate. It participates in cell wall biogenesis; poly(ribitol phosphate) teichoic acid biosynthesis. In terms of biological role, catalyzes the transfer of the cytidylyl group of CTP to D-ribitol 5-phosphate. The polypeptide is Ribitol-5-phosphate cytidylyltransferase (Listeria monocytogenes serovar 1/2a (strain ATCC BAA-679 / EGD-e)).